Here is a 659-residue protein sequence, read N- to C-terminus: uncharacterized protein (659 aa).

16 helical membrane passes run 24–44 (TTLM…YGLF), 71–91 (FGAS…VMMV), 115–135 (IGWL…DSGV), 157–177 (RAWI…RVII), 183–203 (FVLL…GNAG), 214–234 (AVIV…TAAL), 242–262 (AVLI…AELV), 279–299 (LGLV…WALV), 311–331 (LTAL…VQTA), 365–385 (FDSL…AGFV), 393–413 (TWPV…VFTS), 433–453 (MTLN…TLAL), 490–510 (FILF…DTLV), 517–537 (EFMA…IIGI), 550–570 (IGLL…LMTM), and 596–616 (IGGA…IVAL).

This sequence to M.tuberculosis Rv0102.

It is found in the cell membrane. This is an uncharacterized protein from Mycobacterium leprae (strain TN).